The following is a 272-amino-acid chain: D-aminoacyl-tRNA deacylase (272 aa).

This sequence belongs to the DtdA deacylase family. In terms of assembly, monomer. It depends on Zn(2+) as a cofactor.

It catalyses the reaction a D-aminoacyl-tRNA + H2O = a tRNA + a D-alpha-amino acid + H(+). The catalysed reaction is glycyl-tRNA(Ala) + H2O = tRNA(Ala) + glycine + H(+). D-aminoacyl-tRNA deacylase with broad substrate specificity. By recycling D-aminoacyl-tRNA to D-amino acids and free tRNA molecules, this enzyme counteracts the toxicity associated with the formation of D-aminoacyl-tRNA entities in vivo. The protein is D-aminoacyl-tRNA deacylase of Thermococcus kodakarensis (strain ATCC BAA-918 / JCM 12380 / KOD1) (Pyrococcus kodakaraensis (strain KOD1)).